The following is a 100-amino-acid chain: Small ribosomal subunit protein uS14 (100 aa).

The protein belongs to the universal ribosomal protein uS14 family. In terms of assembly, part of the 30S ribosomal subunit. Contacts proteins S3 and S10.

In terms of biological role, binds 16S rRNA, required for the assembly of 30S particles and may also be responsible for determining the conformation of the 16S rRNA at the A site. The polypeptide is Small ribosomal subunit protein uS14 (Trichormus variabilis (strain ATCC 29413 / PCC 7937) (Anabaena variabilis)).